The sequence spans 196 residues: 3-isopropylmalate dehydratase small subunit (196 aa).

The protein belongs to the LeuD family. LeuD type 1 subfamily. Heterodimer of LeuC and LeuD.

The enzyme catalyses (2R,3S)-3-isopropylmalate = (2S)-2-isopropylmalate. Its pathway is amino-acid biosynthesis; L-leucine biosynthesis; L-leucine from 3-methyl-2-oxobutanoate: step 2/4. Functionally, catalyzes the isomerization between 2-isopropylmalate and 3-isopropylmalate, via the formation of 2-isopropylmaleate. In Corynebacterium efficiens (strain DSM 44549 / YS-314 / AJ 12310 / JCM 11189 / NBRC 100395), this protein is 3-isopropylmalate dehydratase small subunit.